The chain runs to 601 residues: Sodium-dependent phosphate transport protein 2C (601 aa).

At 1-75 (MPNSLAGGQV…RRVVSSFLKA (75 aa)) the chain is on the cytoplasmic side. S4 is subject to Phosphoserine. Residues 76 to 96 (CGLLGSLYFFICSLDILSSAF) traverse the membrane as a helical segment. The Extracellular segment spans residues 97–110 (QLLGSKMAGDIFKD). Residues 111–131 (NVVLSNPVAGLVIGVLVTVLV) form a helical membrane-spanning segment. At 132-187 (QSSSTSSSIVVSMVASKLLTVQVSVPIIMGVNVGTSITSTLVSMAQSGDRDEFQRA) the chain is on the cytoplasmic side. Residues 188–208 (FSGSAVHGIFNWLTVLVLLPL) form a helical membrane-spanning segment. The Extracellular portion of the chain corresponds to 209 to 324 (ESATAALERL…FAGSKLTDLA (116 aa)). N-linked (GlcNAc...) asparagine glycans are attached at residues N264, N267, and N299. A disulfide bridge links C275 with C311. Residues 325–345 (VGFILLAGSLLVLCVCLVLIV) traverse the membrane as a helical segment. Topologically, residues 346–369 (KLLNSVLKGRIAQAVKTVINADFP) are cytoplasmic. Residues 370 to 390 (FPFGWLSGYLAILVGAGLTFL) traverse the membrane as a helical segment. Residues 391-441 (LQSSSVFTAAIVPLMGVGVIDLERAYPLFLGSNIGTTTTALLAALASPADM) lie on the Extracellular side of the membrane. The helical transmembrane segment at 442–462 (LIFAVQVALIHFFFNLAGILL) threads the bilayer. Over 463–487 (WYLVPVLRLPIPLAKRFGNLTAQYR) the chain is Cytoplasmic. A helical transmembrane segment spans residues 488-508 (WVAIVYLLLTFLLLPLAAFGL). The Extracellular segment spans residues 509-512 (SLAG). The helical transmembrane segment at 513-533 (GTVLAAVGGPLVGLVLLIILV) threads the bilayer. Over 534–601 (NVLQQHRPSW…NPQVIASQQL (68 aa)) the chain is Cytoplasmic.

This sequence belongs to the SLC34A transporter family. As to expression, expressed only in the kidney.

The protein localises to the apical cell membrane. It carries out the reaction 2 Na(+)(out) + phosphate(out) = 2 Na(+)(in) + phosphate(in). Functionally, involved in actively transporting phosphate into cells via Na(+) cotransport in the renal brush border membrane. The cotransport has a Na(+):Pi stoichiometry of 2:1 and is electroneutral. In Mus musculus (Mouse), this protein is Sodium-dependent phosphate transport protein 2C (Slc34a3).